We begin with the raw amino-acid sequence, 390 residues long: Chitinase-3-like protein 2 (390 aa).

The signal sequence occupies residues 1–26 (MGATTMDQKSLWAGVVVLLLLQGGSA). Positions 27 to 390 (YKLVCYFTNW…QAVKRSLGSL (364 aa)) constitute a GH18 domain. Residues Cys-31 and Cys-56 are joined by a disulfide bond. A glycan (N-linked (GlcNAc...) asparagine) is linked at Asn-35. Residues 75 to 76 (DK), 102 to 105 (GGYL), Tyr-104, Tyr-146, 210 to 213 (LSFD), Asp-213, and Trp-360 contribute to the chitin site.

This sequence belongs to the glycosyl hydrolase 18 family. Highest expression in chondrocytes, followed by synoviocytes, lung and heart. Not detected in spleen, pancreas, and liver. May also be expressed in developing brain and placenta.

The protein localises to the secreted. Lectin that binds chitooligosaccharides and other glycans with high affinity, but not heparin. Has no chitinase activity. This is Chitinase-3-like protein 2 (CHI3L2) from Homo sapiens (Human).